The chain runs to 152 residues: UPF0735 ACT domain-containing protein SAS1579 (152 aa).

Positions 75–150 (TLILYVTDIV…YVSKVELISM (76 aa)) constitute an ACT domain.

The protein belongs to the UPF0735 family.

This Staphylococcus aureus (strain MSSA476) protein is UPF0735 ACT domain-containing protein SAS1579.